We begin with the raw amino-acid sequence, 205 residues long: Small ribosomal subunit protein uS5 (205 aa).

A disordered region spans residues 1–25 (MSGAQRGQRGGERRGGRDDRRGQGA). Over residues 9–24 (RGGERRGGRDDRRGQG) the composition is skewed to basic and acidic residues. The region spanning 30-93 (YIERVVAINR…EEAKKHFFRV (64 aa)) is the S5 DRBM domain.

This sequence belongs to the universal ribosomal protein uS5 family. In terms of assembly, part of the 30S ribosomal subunit. Contacts proteins S4 and S8.

With S4 and S12 plays an important role in translational accuracy. In terms of biological role, located at the back of the 30S subunit body where it stabilizes the conformation of the head with respect to the body. In Nocardioides sp. (strain ATCC BAA-499 / JS614), this protein is Small ribosomal subunit protein uS5.